Here is an 894-residue protein sequence, read N- to C-terminus: Phosphinomethylmalate isomerase (894 aa).

3 residues coordinate [4Fe-4S] cluster: cysteine 438, cysteine 504, and cysteine 507.

Belongs to the aconitase/IPM isomerase family. It depends on [4Fe-4S] cluster as a cofactor.

It carries out the reaction phosphinomethylmalate = phosphinomethylisomalate. It catalyses the reaction phosphinomethylmalate = 2-(phosphinatomethylidene)butanedioate + H2O. The enzyme catalyses 2-(phosphinatomethylidene)butanedioate + H2O = phosphinomethylisomalate. It participates in secondary metabolite biosynthesis; bialaphos biosynthesis. Its function is as follows. Isomerase involved in the biosynthesis of phosphinothricin tripeptide (PTT), also known as bialaphos (BA), a natural-product antibiotic and potent herbicide. Probably catalyzes the isomerization of phosphinomethylmalate to phosphinomethylisomalate. Shows no standard aconitase activity with citrate as a substrate and is not able to complement an acnA mutant. The protein is Phosphinomethylmalate isomerase of Streptomyces viridochromogenes (strain DSM 40736 / JCM 4977 / BCRC 1201 / Tue 494).